Consider the following 83-residue polypeptide: U-actitoxin-Aeq6a (83 aa).

An N-terminal signal peptide occupies residues 1-20; the sequence is MIYKAVFVCLVLVLLGDVFC. Residues 21–36 constitute a propeptide that is removed on maturation; sequence SPRNSGGGTLNDNPFE. Pro-82 is modified (proline amide).

Post-translationally, contains 3 disulfide bonds. As to expression, expressed by acrorhagi.

It localises to the secreted. The protein resides in the nematocyst. Functionally, toxin. The chain is U-actitoxin-Aeq6a from Actinia equina (Beadlet anemone).